We begin with the raw amino-acid sequence, 301 residues long: Acetylglutamate kinase (301 aa).

Substrate contacts are provided by residues 68–69 (GG), Arg90, and Asn195.

The protein belongs to the acetylglutamate kinase family. ArgB subfamily.

It localises to the cytoplasm. It catalyses the reaction N-acetyl-L-glutamate + ATP = N-acetyl-L-glutamyl 5-phosphate + ADP. It functions in the pathway amino-acid biosynthesis; L-arginine biosynthesis; N(2)-acetyl-L-ornithine from L-glutamate: step 2/4. In terms of biological role, catalyzes the ATP-dependent phosphorylation of N-acetyl-L-glutamate. The sequence is that of Acetylglutamate kinase from Pseudomonas aeruginosa (strain LESB58).